The following is a 206-amino-acid chain: Dephospho-CoA kinase (206 aa).

The region spanning 4 to 200 (TVALTGGIGS…ASYLKLASQF (197 aa)) is the DPCK domain. Residue 12–17 (GSGKST) participates in ATP binding.

Belongs to the CoaE family.

It localises to the cytoplasm. It catalyses the reaction 3'-dephospho-CoA + ATP = ADP + CoA + H(+). Its pathway is cofactor biosynthesis; coenzyme A biosynthesis; CoA from (R)-pantothenate: step 5/5. Catalyzes the phosphorylation of the 3'-hydroxyl group of dephosphocoenzyme A to form coenzyme A. This Salmonella typhimurium (strain LT2 / SGSC1412 / ATCC 700720) protein is Dephospho-CoA kinase.